We begin with the raw amino-acid sequence, 363 residues long: UDP-N-acetylglucosamine--N-acetylmuramyl-(pentapeptide) pyrophosphoryl-undecaprenol N-acetylglucosamine transferase (363 aa).

Residues 7 to 9 (TGG), N125, S196, I251, and Q296 each bind UDP-N-acetyl-alpha-D-glucosamine.

This sequence belongs to the glycosyltransferase 28 family. MurG subfamily.

Its subcellular location is the cell membrane. The enzyme catalyses Mur2Ac(oyl-L-Ala-gamma-D-Glu-L-Lys-D-Ala-D-Ala)-di-trans,octa-cis-undecaprenyl diphosphate + UDP-N-acetyl-alpha-D-glucosamine = beta-D-GlcNAc-(1-&gt;4)-Mur2Ac(oyl-L-Ala-gamma-D-Glu-L-Lys-D-Ala-D-Ala)-di-trans,octa-cis-undecaprenyl diphosphate + UDP + H(+). It functions in the pathway cell wall biogenesis; peptidoglycan biosynthesis. In terms of biological role, cell wall formation. Catalyzes the transfer of a GlcNAc subunit on undecaprenyl-pyrophosphoryl-MurNAc-pentapeptide (lipid intermediate I) to form undecaprenyl-pyrophosphoryl-MurNAc-(pentapeptide)GlcNAc (lipid intermediate II). This Latilactobacillus sakei subsp. sakei (strain 23K) (Lactobacillus sakei subsp. sakei) protein is UDP-N-acetylglucosamine--N-acetylmuramyl-(pentapeptide) pyrophosphoryl-undecaprenol N-acetylglucosamine transferase.